A 1435-amino-acid polypeptide reads, in one-letter code: Nitric oxide synthase 1 (1435 aa).

Residues 1-206 form an interaction with NOSIP region; it reads MEEHVFGVQQ…LQGSGDKNEL (206 aa). One can recognise a PDZ domain in the interval 17–99; the sequence is SVRLFKRKVG…ETHVVLILRG (83 aa). 2 disordered regions span residues 110 to 201 and 277 to 304; these read TFTG…QGSG and NNPY…SKCP. The interval 164–246 is interaction with DYNLL1/PIN; that stretch reads QGHGQEAGSP…TGVQVDRDFD (83 aa). Positions 290–300 are enriched in polar residues; it reads GKQSPTKNGSP. Serine 340 contributes to the (6R)-L-erythro-5,6,7,8-tetrahydrobiopterin binding site. Cysteine 421 is a binding site for heme b. Positions 484, 593, 594, and 598 each coordinate L-arginine. Residues valine 683, tryptophan 684, and phenylalanine 697 each coordinate (6R)-L-erythro-5,6,7,8-tetrahydrobiopterin. Position 712 (tyrosine 712) interacts with heme b. The segment at 731 to 751 is calmodulin-binding; the sequence is KRRAIGFKKLAEAVKFSAKLM. The 181-residue stretch at 761–941 folds into the Flavodoxin-like domain; that stretch reads ATILYATETG…AFRTWAKKVF (181 aa). Residues threonine 767, glutamate 768, threonine 769, lysine 771, serine 772, serine 813, threonine 814, and glycine 818 each coordinate FMN. 3 positions are modified to phosphoserine: serine 853, serine 863, and serine 864. FMN is bound by residues serine 892, histidine 897, cysteine 899, glutamate 925, and glutamine 929. Residues 996–1243 enclose the FAD-binding FR-type domain; sequence KRVSAARLLS…VRGAPSFRLP (248 aa). Arginine 1016 is an NADP(+) binding site. FAD is bound by residues histidine 1038, arginine 1179, tyrosine 1180, tyrosine 1181, serine 1182, threonine 1197, and alanine 1199. Serine 1202 contributes to the NADP(+) binding site. FAD-binding residues include tyrosine 1203, valine 1216, cysteine 1217, and serine 1218. NADP(+) is bound by residues threonine 1257, arginine 1290, serine 1319, arginine 1320, lysine 1326, tyrosine 1328, glutamine 1330, aspartate 1363, threonine 1404, and arginine 1406.

Belongs to the NOS family. In terms of assembly, homodimer. Interacts with DLG4; the interaction possibly being prevented by the association between NOS1 and CAPON. Forms a ternary complex with CAPON and RASD1. Forms a ternary complex with CAPON and SYN1. Interacts with ZDHHC23. Interacts with NOSIP; which may impair its synaptic location. Interacts with HTR4. Interacts with SLC6A4. Interacts with VAC14. Interacts (via N-terminal domain) with DLG4 (via N-terminal tandem pair of PDZ domains). Interacts with SLC6A4. Forms a complex with ASL, ASS1 and SLC7A1; the complex regulates cell-autonomous L-arginine synthesis and citrulline recycling while channeling extracellular L-arginine to nitric oxide synthesis pathway. Interacts with DMD; localizes NOS1 to sarcolemma in muscle cells. Interacts with DYNLL1; inhibits the nitric oxide synthase activity. Requires heme b as cofactor. FAD serves as cofactor. It depends on FMN as a cofactor. (6R)-L-erythro-5,6,7,8-tetrahydrobiopterin is required as a cofactor. Post-translationally, ubiquitinated; mediated by STUB1/CHIP in the presence of Hsp70 and Hsp40 (in vitro).

The protein resides in the cell membrane. Its subcellular location is the sarcolemma. It localises to the cell projection. It is found in the dendritic spine. The enzyme catalyses 2 L-arginine + 3 NADPH + 4 O2 + H(+) = 2 L-citrulline + 2 nitric oxide + 3 NADP(+) + 4 H2O. With respect to regulation, stimulated by calcium/calmodulin. Inhibited by DYNLL1 that prevents the dimerization of the protein. Inhibited by NOSIP. In terms of biological role, produces nitric oxide (NO) which is a messenger molecule with diverse functions throughout the body. In the brain and peripheral nervous system, NO displays many properties of a neurotransmitter. Probably has nitrosylase activity and mediates cysteine S-nitrosylation of cytoplasmic target proteins such SRR. The protein is Nitric oxide synthase 1 (NOS1) of Oryctolagus cuniculus (Rabbit).